The sequence spans 714 residues: Glutamine-dependent NAD(+) synthetase (714 aa).

The CN hydrolase domain maps to 5–275; the sequence is ITLATCNLNQ…VEVVTATVDL (271 aa). The Proton acceptor; for glutaminase activity role is filled by E45. The For glutaminase activity role is filled by K114. The active-site Nucleophile; for glutaminase activity is the C175. The ligase stretch occupies residues 329 to 714; the sequence is YHSPEEEIAL…GSTLDIMSID (386 aa). Residue 359-366 participates in ATP binding; it reads PLSGGIDS. The active site involves S361.

This sequence in the C-terminal section; belongs to the NAD synthetase family.

The enzyme catalyses deamido-NAD(+) + L-glutamine + ATP + H2O = L-glutamate + AMP + diphosphate + NAD(+) + H(+). The protein operates within cofactor biosynthesis; NAD(+) biosynthesis; NAD(+) from deamido-NAD(+) (L-Gln route): step 1/1. The protein is Glutamine-dependent NAD(+) synthetase (QNS1) of Saccharomyces cerevisiae (strain ATCC 204508 / S288c) (Baker's yeast).